Here is a 304-residue protein sequence, read N- to C-terminus: Acetylglutamate kinase (304 aa).

Substrate contacts are provided by residues 77–78 (GG), Arg99, and Asn193.

It belongs to the acetylglutamate kinase family. ArgB subfamily.

Its subcellular location is the cytoplasm. It carries out the reaction N-acetyl-L-glutamate + ATP = N-acetyl-L-glutamyl 5-phosphate + ADP. The protein operates within amino-acid biosynthesis; L-arginine biosynthesis; N(2)-acetyl-L-ornithine from L-glutamate: step 2/4. Catalyzes the ATP-dependent phosphorylation of N-acetyl-L-glutamate. The polypeptide is Acetylglutamate kinase (Pelodictyon phaeoclathratiforme (strain DSM 5477 / BU-1)).